Consider the following 507-residue polypeptide: MEELQGYLEIDRSRQQHFLYPLLFQEYIYALAHDHGLNGSIFYEPMENFGYDNKSSSLIVKRLITRMHQQNHVILSVNDSNESIFVGHNKNFYFQMVSEGFAVIMEIPFSLRLVSSLEEKEIAKSHNSRSIHSIFPFFEDKLSHLNHVSDILIPHPIHLEILVQTLHCWIQDAPSLHLLRFFLHEYRNSNSLITPKKSISLFSKENQRFFLLLYNSHVYECESVLVFLRKQSSHLRSTSSGTFLERTHFYGKIEHLVVVLRNDFQKTLWLFKDPFMHYVRYQGKSILASKGTHLLMKKWKSHLVHFWQCHFYLWSLPDRIHINQLYNHFLYFLGYLSSVRLNTSVVGIQMLENSFLIDTSINKFETLVPIIPLIGSVAKAKFCNVSGHPISKSVRADSSDSDIINRFGRIYRNLSHYHSGSSKKQTLYRIKYILRLSCARTLARKHKSTVRAFLKRLGSEFLEEFLTEEEQVLSLIFQRTSSPSYRSHRERIWYLDIIRINDLANHS.

This sequence belongs to the intron maturase 2 family. MatK subfamily.

The protein localises to the plastid. Its subcellular location is the chloroplast. Functionally, usually encoded in the trnK tRNA gene intron. Probably assists in splicing its own and other chloroplast group II introns. This chain is Maturase K, found in Magnolia figo (Banana shrub).